Consider the following 332-residue polypeptide: Agamous-like MADS-box protein AGL66 (332 aa).

Positions 1-61 (MGRVKLEIKR…DRLSLFSGKT (61 aa)) constitute an MADS-box domain. Residues 120-151 (TAINSDVEELEHEVYKLQQQLLMAEEELRKYE) adopt a coiled-coil conformation.

Forms a heterodimer with AGL30. Expressed in pollen.

It is found in the nucleus. Functionally, probable transcription factor that forms a heterodimer with the MADS-box protein AGL30 and is involved in the regulation of pollen maturation at the late stages of pollen development and pollen tube growth. In Arabidopsis thaliana (Mouse-ear cress), this protein is Agamous-like MADS-box protein AGL66.